The primary structure comprises 869 residues: AP-3 complex subunit delta (869 aa).

Ser2 is subject to N-acetylserine. HEAT repeat units lie at residues 33-70 (NFISRAVEEIRREIKATDLSTKSTALHKLSYLAALHGV), 107-142 (SVMLLITNQVRKDLNSANEYEVSLALECLSRIGTHD), 143-179 (LARDLTPEVFTLLGSSKSFVKKKAIGVVLRVFEKYHD), 180-216 (AVKVCFKRLVENLETSDPQILSAVVGVFCELATKDPQ), 218-254 (CLPLAPEFYKVLVDSRNNWVLIKVLKIFAKLALIEPR), 292-329 (AAVKLAVAKIREFLVEDDPNLKYLGLNALSIVAPKHLW), and 330-366 (AVLENKEVVVKAMSDEDPNVKLEALHLLMAMVNEDNV). The segment at 738–869 (ISQDSFNPKR…EQVIIPDFLL (132 aa)) is disordered. Residues 769–780 (ITPQAKTNIQTA) show a composition bias toward polar residues. Residues 815-830 (QEKEESSRIENHQNSE) are compositionally biased toward basic and acidic residues. Over residues 831 to 850 (KKKKKKKKKKGEGSSKHKSR) the composition is skewed to basic residues.

It belongs to the adaptor complexes large subunit family. In terms of assembly, adaptor protein complex 3 (AP-3) is a heterotetramer composed of two large adaptins (delta-type subunit and beta-type subunit), a medium adaptin (mu-type subunit) and a small adaptin (sigma-type subunit). Binds to EPSIN2.

The protein resides in the cytoplasm. It localises to the golgi apparatus membrane. Functionally, part of the AP-3 complex, an adaptor-related complex which seems to be clathrin-associated. The complex is associated with the Golgi region as well as more peripheral structures. It facilitates the budding of vesicles from the Golgi membrane and may be directly involved in trafficking to the vacuole. It also function in maintaining the identity of lytic vacuoles and in regulating the transition between storage and lytic vacuoles. The chain is AP-3 complex subunit delta (DELTA-ADR) from Arabidopsis thaliana (Mouse-ear cress).